Consider the following 582-residue polypeptide: Threonine--tRNA ligase (582 aa).

Residues 185 to 478 are catalytic; that stretch reads DHRKLGKELE…LTEQYGGAFP (294 aa). 3 residues coordinate Zn(2+): Cys-278, His-329, and His-455.

Belongs to the class-II aminoacyl-tRNA synthetase family. Homodimer. It depends on Zn(2+) as a cofactor.

It localises to the cytoplasm. It carries out the reaction tRNA(Thr) + L-threonine + ATP = L-threonyl-tRNA(Thr) + AMP + diphosphate + H(+). Catalyzes the attachment of threonine to tRNA(Thr) in a two-step reaction: L-threonine is first activated by ATP to form Thr-AMP and then transferred to the acceptor end of tRNA(Thr). Also edits incorrectly charged L-seryl-tRNA(Thr). This chain is Threonine--tRNA ligase, found in Dehalococcoides mccartyi (strain CBDB1).